A 99-amino-acid polypeptide reads, in one-letter code: Large ribosomal subunit protein uL23 (99 aa).

Belongs to the universal ribosomal protein uL23 family. As to quaternary structure, part of the 50S ribosomal subunit. Contacts protein L29, and trigger factor when it is bound to the ribosome.

One of the early assembly proteins it binds 23S rRNA. One of the proteins that surrounds the polypeptide exit tunnel on the outside of the ribosome. Forms the main docking site for trigger factor binding to the ribosome. The protein is Large ribosomal subunit protein uL23 of Synechococcus sp. (strain JA-2-3B'a(2-13)) (Cyanobacteria bacterium Yellowstone B-Prime).